Reading from the N-terminus, the 481-residue chain is Dual specificity protein kinase CLK4 (481 aa).

2 disordered regions span residues 1–47 and 102–143; these read MRHS…KPHH and SKSS…EDDE. A compositionally biased stretch (basic and acidic residues) spans 8–19; that stretch reads HCPDWDSRESWG. Composition is skewed to basic residues over residues 106-119 and 126-136; these read VRSR…KRNR and SHSKSHRRKRS. Phosphoserine occurs at positions 136 and 138. Residues 159 to 475 enclose the Protein kinase domain; it reads YEIVDTLGEG…LDEALQHPFF (317 aa). ATP-binding positions include 165–173 and K189; that span reads LGEGAFGKV. The active-site Proton acceptor is D286.

The protein belongs to the protein kinase superfamily. CMGC Ser/Thr protein kinase family. Lammer subfamily. Interacts with UBL5. Post-translationally, autophosphorylates on all three types of residues. In terms of tissue distribution, expressed in the hippocampus, the cerebellum and the olfactory bulb.

It localises to the nucleus. The catalysed reaction is L-seryl-[protein] + ATP = O-phospho-L-seryl-[protein] + ADP + H(+). It catalyses the reaction L-threonyl-[protein] + ATP = O-phospho-L-threonyl-[protein] + ADP + H(+). The enzyme catalyses L-tyrosyl-[protein] + ATP = O-phospho-L-tyrosyl-[protein] + ADP + H(+). TG003 inhibits its kinase activity and affects the regulation of alternative splicing mediated by phosphorylation of SR proteins. In terms of biological role, dual specificity kinase acting on both serine/threonine and tyrosine-containing substrates. Phosphorylates serine- and arginine-rich (SR) proteins of the spliceosomal complex and may be a constituent of a network of regulatory mechanisms that enable SR proteins to control RNA splicing. Phosphorylates SRSF1 and SRSF3. Required for the regulation of alternative splicing of MAPT/TAU. Regulates the alternative splicing of tissue factor (F3) pre-mRNA in endothelial cells. The polypeptide is Dual specificity protein kinase CLK4 (Clk4) (Mus musculus (Mouse)).